A 617-amino-acid polypeptide reads, in one-letter code: MGIISDNAQSHSSSSAPAPSIFSSSFATRIFSDVAGDITIVVDGESFLLHKFPLVARCGKIRKMVAEMKESSSNLSHTELRDFPGGSKTFELAMKFCYGINFEITISNVVAIRCAAGYLEMTEDFKEENLIARTETYLEQVAFRSLEKSVEVLCSCETLYPQDIAETAHIPDRCVEAIAVNACREQLVLGLSRLNRGTESGELKRGDSPEWWIEDLSALRIDYYARVVSAMARTGLRSESIITSLMHYAQESLKGIRNCKERTKLDSGTFENEQRNVLEAIVSLFPNDNVPLSFLFGMLRVGITINVAISCRLELERRIAQQLETVSLDDLLIPVVRDGDSMYDVDTVHRILVCFLKKIEEEEEYDEDCCYENETENLTGSMCHSSLLKVGRIMDAYLAEIAPDPCLSLHKFMALIEILPDYARVMDDGLYRAIDMFLKGHPSLNEQECKSLCKFIDTQKLSQEACNHVAQNDRLPMQMVVRVLYSEQLRMKNVMSGESGEGLLLSSQKHSSENPSRAVSPRDTYASLRRENRELKLEISRVRVRLTELEKEQILMKQGMMEKSGHGGTLLTSLSKGIGRISIFGGGPTEGKLRNANRKSKSRLERKTVRSRPESMF.

The BTB domain occupies 36-106 (GDITIVVDGE…CYGINFEITI (71 aa)). The 281-residue stretch at 210 to 490 (EWWIEDLSAL…VRVLYSEQLR (281 aa)) folds into the NPH3 domain. Phosphotyrosine is present on Y431. 2 disordered regions span residues 505–525 (LSSQ…RDTY) and 585–617 (GGGP…ESMF). Basic and acidic residues predominate over residues 602 to 617 (SRLERKTVRSRPESMF).

This sequence belongs to the NPH3 family.

It participates in protein modification; protein ubiquitination. Its function is as follows. May act as a substrate-specific adapter of an E3 ubiquitin-protein ligase complex (CUL3-RBX1-BTB) which mediates the ubiquitination and subsequent proteasomal degradation of target proteins. The protein is BTB/POZ domain-containing protein At3g08570 of Arabidopsis thaliana (Mouse-ear cress).